Reading from the N-terminus, the 649-residue chain is Endoplasmic reticulum chaperone BiP (649 aa).

The first 20 residues, 1–20 (MGLSTYVGTFLLCILTLSHC), serve as a signal peptide directing secretion. Residues 36-39 (GTTY), K96, 226-228 (GGT), 292-299 (EKAKRTLS), and 363-366 (GSTR) contribute to the ATP site. The nucleotide-binding (NBD) stretch occupies residues 125-279 (KPYMKVQVGS…KKKEGKDITK (155 aa)). Residues 399-499 (VQAGVISGVE…PRGLPQIEVT (101 aa)) form a substrate-binding (SBD) region. The Prevents secretion from ER signature appears at 646–649 (KEEL).

It belongs to the heat shock protein 70 family.

The protein localises to the endoplasmic reticulum lumen. It carries out the reaction ATP + H2O = ADP + phosphate + H(+). The chaperone activity is regulated by ATP-induced allosteric coupling of the nucleotide-binding (NBD) and substrate-binding (SBD) domains. In the ADP-bound and nucleotide-free (apo) states, the two domains have little interaction. In contrast, in the ATP-bound state the two domains are tightly coupled, which results in drastically accelerated kinetics in both binding and release of polypeptide substrates. J domain-containing co-chaperones stimulate the ATPase activity and are required for efficient substrate recognition. Endoplasmic reticulum chaperone that plays a key role in protein folding and quality control in the endoplasmic reticulum lumen. Involved in the correct folding of proteins and degradation of misfolded proteins. Acts as a key repressor of the unfolded protein response (UPR). In Echinococcus multilocularis (Fox tapeworm), this protein is Endoplasmic reticulum chaperone BiP.